The sequence spans 393 residues: tRNA(Met) cytidine acetate ligase (393 aa).

ATP is bound by residues Gly81, Asn142, and Arg167.

Belongs to the TmcAL family.

It localises to the cytoplasm. It carries out the reaction cytidine(34) in elongator tRNA(Met) + acetate + ATP = N(4)-acetylcytidine(34) in elongator tRNA(Met) + AMP + diphosphate. Functionally, catalyzes the formation of N(4)-acetylcytidine (ac(4)C) at the wobble position of elongator tRNA(Met), using acetate and ATP as substrates. First activates an acetate ion to form acetyladenylate (Ac-AMP) and then transfers the acetyl group to tRNA to form ac(4)C34. The chain is tRNA(Met) cytidine acetate ligase from Bacillus mycoides (strain KBAB4) (Bacillus weihenstephanensis).